The following is a 344-amino-acid chain: L-threonine 3-dehydrogenase (344 aa).

Cysteine 42 is a binding site for Zn(2+). Residues threonine 44 and histidine 47 each act as charge relay system in the active site. Zn(2+) contacts are provided by histidine 67, glutamate 68, cysteine 97, cysteine 100, cysteine 103, and cysteine 111. Residues isoleucine 179, aspartate 199, arginine 204, 266 to 268, and 290 to 291 each bind NAD(+); these read LGI and IY.

It belongs to the zinc-containing alcohol dehydrogenase family. As to quaternary structure, homotetramer. It depends on Zn(2+) as a cofactor.

It localises to the cytoplasm. It carries out the reaction L-threonine + NAD(+) = (2S)-2-amino-3-oxobutanoate + NADH + H(+). Its pathway is amino-acid degradation; L-threonine degradation via oxydo-reductase pathway; glycine from L-threonine: step 1/2. Its function is as follows. Catalyzes the NAD(+)-dependent oxidation of L-threonine to 2-amino-3-ketobutyrate. The protein is L-threonine 3-dehydrogenase of Chelativorans sp. (strain BNC1).